We begin with the raw amino-acid sequence, 261 residues long: MAAAAAAAAAAGDSDSWDADTFSMEDPVRKVAGGGTAGGDRWEGEDEDEDVKDNWDDDDDENKEEAEVKPEVKISEKKKIAEKIKEKERQQKKRQEEIKKRLEEPEESKVLTPEEQLADKLRLKKLQEESDLELAKETFGVNNTVYGIDAMNPSSRDDFTEFGKLLKDKITQYEKSLYYASFLEALVRDVCISLEIDDLKKITNSLTVLCSEKQKQEKQSKAKKKKKGVVPGGGLKATMKDDLADYGGYEGGYVQDYEDFM.

A compositionally biased stretch (low complexity) spans 1–11 (MAAAAAAAAAA). The disordered stretch occupies residues 1–113 (MAAAAAAAAA…EPEESKVLTP (113 aa)). Positions 4–72 (AAAAAAAAGD…KEEAEVKPEV (69 aa)) are sufficient for interaction with EIF3B. Serine 14, serine 16, and serine 23 each carry phosphoserine. The span at 43–64 (EGEDEDEDVKDNWDDDDDENKE) shows a compositional bias: acidic residues. A compositionally biased stretch (basic and acidic residues) spans 65-109 (EAEVKPEVKISEKKKIAEKIKEKERQQKKRQEEIKKRLEEPEESK). The stretch at 73–138 (KISEKKKIAE…ESDLELAKET (66 aa)) forms a coiled coil. Residue lysine 109 forms a Glycyl lysine isopeptide (Lys-Gly) (interchain with G-Cter in SUMO2) linkage. Position 112 is a phosphothreonine (threonine 112). Phosphoserine is present on serine 130. Residues 246 to 261 (YGGYEGGYVQDYEDFM) are promotes stable association with the 40S ribosome. Tyrosine 257 bears the Phosphotyrosine mark.

The protein belongs to the eIF-3 subunit J family. As to quaternary structure, component of the eukaryotic translation initiation factor 3 (eIF-3) complex, which is composed of 13 subunits: EIF3A, EIF3B, EIF3C, EIF3D, EIF3E, EIF3F, EIF3G, EIF3H, EIF3I, EIF3J, EIF3K, EIF3L and EIF3M. The eIF-3 complex appears to include 3 stable modules: module A is composed of EIF3A, EIF3B, EIF3G and EIF3I; module B is composed of EIF3F, EIF3H, and EIF3M; and module C is composed of EIF3C, EIF3D, EIF3E, EIF3K and EIF3L. EIF3C of module C binds EIF3B of module A and EIF3H of module B, thereby linking the three modules. EIF3J is a labile subunit that binds to the eIF-3 complex via EIF3B. The eIF-3 complex interacts with RPS6KB1 under conditions of nutrient depletion. Mitogenic stimulation leads to binding and activation of a complex composed of MTOR and RPTOR, leading to phosphorylation and release of RPS6KB1 and binding of EIF4B to eIF-3. In terms of processing, phosphorylated. Phosphorylation is enhanced upon serum stimulation.

Its subcellular location is the cytoplasm. Component of the eukaryotic translation initiation factor 3 (eIF-3) complex, which is required for several steps in the initiation of protein synthesis. The eIF-3 complex associates with the 40S ribosome and facilitates the recruitment of eIF-1, eIF-1A, eIF-2:GTP:methionyl-tRNAi and eIF-5 to form the 43S pre-initiation complex (43S PIC). The eIF-3 complex stimulates mRNA recruitment to the 43S PIC and scanning of the mRNA for AUG recognition. The eIF-3 complex is also required for disassembly and recycling of post-termination ribosomal complexes and subsequently prevents premature joining of the 40S and 60S ribosomal subunits prior to initiation. The eIF-3 complex specifically targets and initiates translation of a subset of mRNAs involved in cell proliferation, including cell cycling, differentiation and apoptosis, and uses different modes of RNA stem-loop binding to exert either translational activation or repression. This subunit binds directly within the mRNA entry channel of the 40S ribosome to the aminoacyl (A) site. It may regulate the interaction between the 43S PIC and mRNA. The sequence is that of Eukaryotic translation initiation factor 3 subunit J-A (Eif3j1) from Mus musculus (Mouse).